Consider the following 59-residue polypeptide: MAKVVITLVKSPIGYEKSQRATVVALGFKKGKRVVEKEATPQINGMINKISHLLKVEYK.

The protein belongs to the universal ribosomal protein uL30 family. In terms of assembly, part of the 50S ribosomal subunit.

This Brachyspira hyodysenteriae (strain ATCC 49526 / WA1) protein is Large ribosomal subunit protein uL30.